A 398-amino-acid polypeptide reads, in one-letter code: Ubiquitin-like modifier-activating enzyme 5 (398 aa).

Positions 76, 97, 120, 143, and 177 each coordinate ATP. Positions 219 and 222 each coordinate Zn(2+). The active-site Glycyl thioester intermediate is the cysteine 243. Positions 296 and 301 each coordinate Zn(2+).

It belongs to the ubiquitin-activating E1 family. UBA5 subfamily.

In terms of biological role, E1-like enzyme which activates UFM1. The polypeptide is Ubiquitin-like modifier-activating enzyme 5 (Drosophila grimshawi (Hawaiian fruit fly)).